A 107-amino-acid polypeptide reads, in one-letter code: Small leucine-rich protein 1 (107 aa).

Transmembrane regions (helical) follow at residues 19–39 (AALV…LAMS) and 53–73 (FLFF…IAYF). The segment at 85-107 (SQNCDRQHNPKDGSSLYQRMKWT) is disordered.

It localises to the membrane. This chain is Small leucine-rich protein 1 (SMLR1), found in Homo sapiens (Human).